The following is a 416-amino-acid chain: UDP-N-acetylglucosamine 1-carboxyvinyltransferase (416 aa).

22–23 (KN) is a binding site for phosphoenolpyruvate. Arg-91 provides a ligand contact to UDP-N-acetyl-alpha-D-glucosamine. Cys-115 (proton donor) is an active-site residue. A 2-(S-cysteinyl)pyruvic acid O-phosphothioketal modification is found at Cys-115. UDP-N-acetyl-alpha-D-glucosamine-binding positions include 120–124 (RPIDL), Asp-305, and Ile-327.

This sequence belongs to the EPSP synthase family. MurA subfamily.

Its subcellular location is the cytoplasm. It catalyses the reaction phosphoenolpyruvate + UDP-N-acetyl-alpha-D-glucosamine = UDP-N-acetyl-3-O-(1-carboxyvinyl)-alpha-D-glucosamine + phosphate. It functions in the pathway cell wall biogenesis; peptidoglycan biosynthesis. Its function is as follows. Cell wall formation. Adds enolpyruvyl to UDP-N-acetylglucosamine. The protein is UDP-N-acetylglucosamine 1-carboxyvinyltransferase of Buchnera aphidicola subsp. Acyrthosiphon pisum (strain APS) (Acyrthosiphon pisum symbiotic bacterium).